The sequence spans 242 residues: Ribosomal RNA small subunit methyltransferase G (242 aa).

Residues glycine 82, phenylalanine 87, 133 to 134 (AE), and arginine 152 contribute to the S-adenosyl-L-methionine site.

This sequence belongs to the methyltransferase superfamily. RNA methyltransferase RsmG family.

The protein resides in the cytoplasm. Functionally, specifically methylates the N7 position of a guanine in 16S rRNA. The chain is Ribosomal RNA small subunit methyltransferase G from Acetivibrio thermocellus (strain ATCC 27405 / DSM 1237 / JCM 9322 / NBRC 103400 / NCIMB 10682 / NRRL B-4536 / VPI 7372) (Clostridium thermocellum).